We begin with the raw amino-acid sequence, 240 residues long: Mediator of RNA polymerase II transcription subunit 19-B (240 aa).

Residues 1–14 (MTEIFSSLYGQPDS) show a composition bias toward polar residues. Disordered stretches follow at residues 1-29 (MTEI…GSGK) and 168-240 (PKKK…SSLR). Basic residues-rich tracts occupy residues 168–180 (PKKK…KHHR) and 209–221 (KKKK…KKNR).

It belongs to the Mediator complex subunit 19 family. In terms of assembly, component of the Mediator complex.

Its subcellular location is the nucleus. Component of the Mediator complex, a coactivator involved in the regulated transcription of nearly all RNA polymerase II-dependent genes. Mediator functions as a bridge to convey information from gene-specific regulatory proteins to the basal RNA polymerase II transcription machinery. Mediator is recruited to promoters by direct interactions with regulatory proteins and serves as a scaffold for the assembly of a functional preinitiation complex with RNA polymerase II and the general transcription factors. The polypeptide is Mediator of RNA polymerase II transcription subunit 19-B (med19b) (Danio rerio (Zebrafish)).